Here is a 117-residue protein sequence, read N- to C-terminus: Large ribosomal subunit protein bL17 (117 aa).

This sequence belongs to the bacterial ribosomal protein bL17 family. As to quaternary structure, part of the 50S ribosomal subunit. Contacts protein L32.

This is Large ribosomal subunit protein bL17 from Campylobacter jejuni subsp. jejuni serotype O:6 (strain 81116 / NCTC 11828).